Consider the following 209-residue polypeptide: Molybdenum cofactor guanylyltransferase (209 aa).

GTP contacts are provided by residues 14-16, K31, and D104; that span reads LAG. D104 is a Mg(2+) binding site.

The protein belongs to the MobA family. Monomer. The cofactor is Mg(2+).

It localises to the cytoplasm. It catalyses the reaction Mo-molybdopterin + GTP + H(+) = Mo-molybdopterin guanine dinucleotide + diphosphate. Its function is as follows. Transfers a GMP moiety from GTP to Mo-molybdopterin (Mo-MPT) cofactor (Moco or molybdenum cofactor) to form Mo-molybdopterin guanine dinucleotide (Mo-MGD) cofactor. The sequence is that of Molybdenum cofactor guanylyltransferase from Helicobacter pylori (strain J99 / ATCC 700824) (Campylobacter pylori J99).